Reading from the N-terminus, the 122-residue chain is Basic phospholipase A2 (122 aa).

7 cysteine pairs are disulfide-bonded: Cys26–Cys115, Cys28–Cys44, Cys43–Cys95, Cys49–Cys122, Cys50–Cys88, Cys57–Cys81, and Cys75–Cys86. Ca(2+) contacts are provided by Tyr27, Gly29, and Gly31. The active site involves His47. Asp48 contacts Ca(2+). Residue Asp89 is part of the active site.

This sequence belongs to the phospholipase A2 family. Group II subfamily. D49 sub-subfamily. The cofactor is Ca(2+). In terms of tissue distribution, expressed by the venom gland.

Its subcellular location is the secreted. The catalysed reaction is a 1,2-diacyl-sn-glycero-3-phosphocholine + H2O = a 1-acyl-sn-glycero-3-phosphocholine + a fatty acid + H(+). In terms of biological role, snake venom phospholipase A2 (PLA2) that does not inhibit platelet aggregation. Exhibits cytotoxic and anticoagulant activity. Induces Ehrlich tumor growth but not angiogenesis. PLA2 catalyzes the calcium-dependent hydrolysis of the 2-acyl groups in 3-sn-phosphoglycerides. The sequence is that of Basic phospholipase A2 from Bothrops leucurus (Whitetail lancehead).